We begin with the raw amino-acid sequence, 267 residues long: N-acetylgalactosamine permease IIC component 1 (267 aa).

The Periplasmic segment spans residues 1 to 10; the sequence is MHEITLLQGL. Residues 1 to 237 enclose the PTS EIIC type-4 domain; sequence MHEITLLQGL…VAVLGAGFAV (237 aa). The helical transmembrane segment at 11–31 threads the bilayer; sequence SLAALVFVLGIDFWLEALFLF. At 32–33 the chain is on the cytoplasmic side; that stretch reads RP. The helical transmembrane segment at 34-54 threads the bilayer; it reads IIVCTLTGAILGDIQTGLITG. The Periplasmic portion of the chain corresponds to 55–66; it reads GLTELAFAGLTP. The chain crosses the membrane as a helical span at residues 67–87; that stretch reads AGGVQPPNPIMAGLMTTVIAW. At 88–94 the chain is on the cytoplasmic side; that stretch reads STGVDAK. A helical membrane pass occupies residues 95–115; the sequence is TAIGLGLPFSLLMQYVILFFY. Residues 116–141 are Periplasmic-facing; the sequence is SAFSLFMTKADKCAKEADTAAFSRLN. The chain crosses the membrane as a helical span at residues 142-162; the sequence is WTTMLIVASAYAVIAFLCTYL. At 163-177 the chain is on the cytoplasmic side; the sequence is AQGAMQALVKAMPAW. The chain crosses the membrane as a helical span at residues 178–198; it reads LTHGFEVAGGILPAVGFGLLL. The Periplasmic segment spans residues 199-209; sequence RVMFKAQYIPY. A helical transmembrane segment spans residues 210 to 230; the sequence is LIAGFLFVCYIQVSNLLPVAV. Residues 231–267 are Cytoplasmic-facing; it reads LGAGFAVYEFFNAKSRQQAQPQPVASKNEEEDYSNGI.

It localises to the cell inner membrane. The phosphoenolpyruvate-dependent sugar phosphotransferase system (PTS), a major carbohydrate active -transport system, catalyzes the phosphorylation of incoming sugar substrates concomitant with their translocation across the cell membrane. This system is involved in N-acetylgalactosamine transport. The chain is N-acetylgalactosamine permease IIC component 1 (agaC) from Escherichia coli (strain K12).